The chain runs to 461 residues: Argininosuccinate lyase (461 aa).

Belongs to the lyase 1 family. Argininosuccinate lyase subfamily.

It localises to the cytoplasm. It carries out the reaction 2-(N(omega)-L-arginino)succinate = fumarate + L-arginine. The protein operates within amino-acid biosynthesis; L-arginine biosynthesis; L-arginine from L-ornithine and carbamoyl phosphate: step 3/3. This chain is Argininosuccinate lyase, found in Streptococcus thermophilus (strain CNRZ 1066).